Here is a 1340-residue protein sequence, read N- to C-terminus: Lysine-specific demethylase ELF6 (1340 aa).

The JmjN domain occupies 16–57; sequence APVFRPTDTEFADPIAYISKIEKEASAFGICKIIPPLPKPSK. Residues 195–245 are disordered; sequence QRKRRGRGFYQRKTENNDPSGKNGEKSSPEVEKAPLASTSLSSQDSSKQKN. Basic and acidic residues predominate over residues 217–227; sequence NGEKSSPEVEK. Positions 262 to 428 constitute a JmjC domain; the sequence is NSSWNLQMIA…VAKEAAVRRA (167 aa). Residues His-305, Glu-307, and His-396 each contribute to the Fe cation site. The short motif at 818–825 is the Nuclear localization signal 1 element; that stretch reads GKKEEKII. The segment at 1092 to 1225 is disordered; sequence GEPLESSDIL…SRQQEVPTTT (134 aa). Residues 1099-1115 are compositionally biased toward polar residues; sequence DILSSSNGDEASSNGLQ. Residues 1124-1133 show a composition bias toward low complexity; sequence ESEVSSSENT. The segment covering 1188 to 1201 has biased composition (basic and acidic residues); that stretch reads SLKHTETSDEEKKP. Positions 1215 to 1225 are enriched in polar residues; it reads GSRQQEVPTTT. 4 consecutive C2H2-type zinc fingers follow at residues 1228–1250, 1251–1275, 1281–1305, and 1311–1337; these read NRCYLEGCKMTFESKAKLQTHKR, NRCTHEGCGKKFRAHKYLVLHQRVH, FECSWKGCSMTFKWQWARTEHLRLH, and YICKVDGCGLSFRFVSDYSRHRRKTMH. Residues Cys-1230, Cys-1235, His-1248, Cys-1253, Cys-1258, His-1265, His-1271, His-1275, Cys-1283, Cys-1288, His-1301, His-1305, Cys-1313, Cys-1318, His-1331, and His-1337 each coordinate Zn(2+). Positions 1248-1255 match the Nuclear localization signal 2 motif; that stretch reads HKRNRCTH. The DNA-binding stretch occupies residues 1260-1333; the sequence is KKFRAHKYLV…FVSDYSRHRR (74 aa).

Belongs to the JHDM3 histone demethylase family. As to quaternary structure, interacts with BZR2 (via N-terminus). Expressed at low levels in seedlings, cotyledons and leaves. Detected in inflorescences, stems, roots and siliques but not in shoot apical meristems or root tips. Accumulates in flowers and embryos.

The protein localises to the nucleus. It catalyses the reaction N(6),N(6),N(6)-trimethyl-L-lysyl(27)-[histone H3] + 2-oxoglutarate + O2 = N(6),N(6)-dimethyl-L-lysyl(27)-[histone H3] + formaldehyde + succinate + CO2. The enzyme catalyses N(6),N(6)-dimethyl-L-lysyl(27)-[histone H3] + 2-oxoglutarate + O2 = N(6)-methyl-L-lysyl(27)-[histone H3] + formaldehyde + succinate + CO2. Its function is as follows. Histone demethylase that demethylates 'Lys-27' (H3K27me) of histone H3, thus acting as a positive regulator of gene expression. Demethylates tri-methylated (H3K27me3) and di-methylated (H3K27me2) H3K27me. Inactive on H3K27me1, H3K4me3, H3K9me2 and H3K36me3. Acts as a repressor of the photoperiodic flowering pathway and of FT. May also be active on H3K4me. Binds around the transcription start site of the FT locus. Required for epigenetic reprogramming by resetting the expression of the floral repressor FLC locus, thus aluviating cold-mediated FLC epigenetically silencing occurring during vernalization and preventing inapropriate epigenetic states inheritence. In terms of biological role, together with REF6, required for H3K27me3 resetting (especially in constitutive heterochromatin within the pericentromeric regions) and transgenerational inheritance of histone marks, thus acting in safeguarding genome and epigenome integrity during sexual reproduction. In Arabidopsis thaliana (Mouse-ear cress), this protein is Lysine-specific demethylase ELF6.